The chain runs to 320 residues: ATP-dependent 6-phosphofructokinase (320 aa).

G12 is a binding site for ATP. 22–26 is a binding site for ADP; that stretch reads RGVVR. ATP is bound by residues 73-74 and 103-106; these read RF and GDGS. D104 contacts Mg(2+). Residue 126 to 128 coordinates substrate; that stretch reads TID. The Proton acceptor role is filled by D128. R155 contributes to the ADP binding site. Residues R163 and 170-172 contribute to the substrate site; that span reads MGR. ADP contacts are provided by residues 186-188, K212, and 214-216; these read GCE and KKH. Substrate-binding positions include E223, R244, and 250–253; that span reads HIQR.

Belongs to the phosphofructokinase type A (PFKA) family. ATP-dependent PFK group I subfamily. Prokaryotic clade 'B1' sub-subfamily. In terms of assembly, homotetramer. Mg(2+) serves as cofactor.

It is found in the cytoplasm. It carries out the reaction beta-D-fructose 6-phosphate + ATP = beta-D-fructose 1,6-bisphosphate + ADP + H(+). It functions in the pathway carbohydrate degradation; glycolysis; D-glyceraldehyde 3-phosphate and glycerone phosphate from D-glucose: step 3/4. With respect to regulation, allosterically activated by ADP and other diphosphonucleosides, and allosterically inhibited by phosphoenolpyruvate. Catalyzes the phosphorylation of D-fructose 6-phosphate to fructose 1,6-bisphosphate by ATP, the first committing step of glycolysis. This chain is ATP-dependent 6-phosphofructokinase, found in Vibrio cholerae serotype O1 (strain ATCC 39315 / El Tor Inaba N16961).